We begin with the raw amino-acid sequence, 979 residues long: Translation initiation factor IF-2 (979 aa).

Positions 68–386 (VKQKQGTPAS…DKRDAASRAA (319 aa)) are disordered. Basic and acidic residues-rich tracts occupy residues 102–179 (QDMR…KPEE), 217–229 (EMEKKEDTEEVFR), and 260–273 (TKEDRQREQNDADG). Over residues 317 to 326 (RPAQQQSNAS) the composition is skewed to polar residues. The segment covering 347 to 356 (DVQRQVKETL) has biased composition (basic and acidic residues). A tr-type G domain is found at 478-646 (ARPPIVTVMG…KVLLEADILE (169 aa)). The interval 487–494 (GHVDHGKT) is G1. 487-494 (GHVDHGKT) serves as a coordination point for GTP. The segment at 512-516 (GITQH) is G2. The G3 stretch occupies residues 534–537 (DTPG). Residues 534–538 (DTPGH) and 588–591 (NKID) contribute to the GTP site. The segment at 588–591 (NKID) is G4. The segment at 624–626 (SAK) is G5.

Belongs to the TRAFAC class translation factor GTPase superfamily. Classic translation factor GTPase family. IF-2 subfamily.

It localises to the cytoplasm. One of the essential components for the initiation of protein synthesis. Protects formylmethionyl-tRNA from spontaneous hydrolysis and promotes its binding to the 30S ribosomal subunits. Also involved in the hydrolysis of GTP during the formation of the 70S ribosomal complex. In Porphyromonas gingivalis (strain ATCC BAA-308 / W83), this protein is Translation initiation factor IF-2.